Here is a 212-residue protein sequence, read N- to C-terminus: Lipid A acyltransferase PagP (212 aa).

The first 26 residues, 1 to 26, serve as a signal peptide directing secretion; that stretch reads MSSTYFHSSLLAATLFSVTLTAPAFA. Residues 29 to 44 show a composition bias toward low complexity; sequence NTQNTPQTITTKKPQP. The segment at 29–50 is disordered; sequence NTQNTPQTITTKKPQPAENTFS. Catalysis depends on residues His-84, Asp-127, and Ser-128.

This sequence belongs to the lipid A palmitoyltransferase family. Homodimer.

The protein resides in the cell outer membrane. The catalysed reaction is a lipid A + a 1,2-diacyl-sn-glycero-3-phosphocholine = a hepta-acyl lipid A + a 2-acyl-sn-glycero-3-phosphocholine. The enzyme catalyses a lipid IVA + a 1,2-diacyl-sn-glycero-3-phosphocholine = a lipid IVB + a 2-acyl-sn-glycero-3-phosphocholine. It carries out the reaction a lipid IIA + a 1,2-diacyl-sn-glycero-3-phosphocholine = a lipid IIB + a 2-acyl-sn-glycero-3-phosphocholine. In terms of biological role, transfers a fatty acid residue from the sn-1 position of a phospholipid to the N-linked hydroxyfatty acid chain on the proximal unit of lipid A or its precursors. This is Lipid A acyltransferase PagP from Proteus mirabilis (strain HI4320).